The primary structure comprises 367 residues: B2 bradykinin receptor (367 aa).

At 1 to 36 (MLNITSQVLAPALNGSVSQSSGCPNTEWSGWLNVIQ) the chain is on the extracellular side. 2 N-linked (GlcNAc...) asparagine glycosylation sites follow: asparagine 3 and asparagine 14. The chain crosses the membrane as a helical span at residues 37 to 60 (APFLWVLFVLATLENLFVLSVFCL). Residues 61-69 (HKSSCTVAE) lie on the Cytoplasmic side of the membrane. A helical membrane pass occupies residues 70-94 (VYLGNLAAADLILACGLPFWAVTIA). The Extracellular portion of the chain corresponds to 95–107 (NHFDWLFGEALCR). A disulfide bridge links cysteine 106 with cysteine 187. The helical transmembrane segment at 108-129 (VVNTMIYMNLYSSICFLMLVSI) threads the bilayer. Topologically, residues 130-151 (DRYLALVKTMSIGRMRRVRWAK) are cytoplasmic. At tyrosine 132 the chain carries Phosphotyrosine. A helical membrane pass occupies residues 152–174 (LYSLVIWGCTLLLSSPMLVFRTM). Topologically, residues 175 to 197 (KDYRDEGYNVTACIIDYPSRSWE) are extracellular. Asparagine 183 carries N-linked (GlcNAc...) asparagine glycosylation. A helical membrane pass occupies residues 198 to 224 (VFTNVLLNLVGFLLPLSVITFCTVQIL). At 225–243 (QVLRNNEMQKFKEIQTERR) the chain is on the cytoplasmic side. A helical membrane pass occupies residues 244 to 268 (ATVLVLAVLLLFVVCWLPFQVSTFL). Residues 269–287 (DTLLKLGVLSSCWDEHVID) lie on the Extracellular side of the membrane. A helical transmembrane segment spans residues 288–311 (VITQVGSFMGYSNSCLNPLVYVIV). Residues 312–367 (GKRFRKKSREVYRAACPKAGCVLEPVQAESSMGTLRTSISVERQIHKLPEWTRSSQ) lie on the Cytoplasmic side of the membrane. Tyrosine 323 carries the phosphotyrosine modification. Cysteine 327 carries the S-palmitoyl cysteine lipid modification. The residue at position 342 (serine 342) is a Phosphoserine. A Phosphothreonine modification is found at threonine 345. Serine 349 and serine 351 each carry phosphoserine; by GRK6.

The protein belongs to the G-protein coupled receptor 1 family. Bradykinin receptor subfamily. BDKRB2 sub-subfamily. In terms of assembly, forms a complex with PECAM1 and GNAQ. Interacts with PECAM1.

The protein resides in the cell membrane. Receptor for bradykinin. It is associated with G proteins that activate a phosphatidylinositol-calcium second messenger system. This Oryctolagus cuniculus (Rabbit) protein is B2 bradykinin receptor (BDKRB2).